We begin with the raw amino-acid sequence, 101 residues long: Large ribosomal subunit protein eL43 (101 aa).

Residues Cys40, Cys43, Cys59, and Cys62 each contribute to the Zn(2+) site. The segment at 40–62 (CPSCRSLVRLERIAFGIWRCPKC) adopts a C4-type zinc-finger fold.

It belongs to the eukaryotic ribosomal protein eL43 family. Putative zinc-binding subfamily. Part of the 50S ribosomal subunit. Requires Zn(2+) as cofactor.

Binds to the 23S rRNA. The polypeptide is Large ribosomal subunit protein eL43 (Pyrobaculum aerophilum (strain ATCC 51768 / DSM 7523 / JCM 9630 / CIP 104966 / NBRC 100827 / IM2)).